Here is a 270-residue protein sequence, read N- to C-terminus: Hydroxyethylthiazole kinase (270 aa).

Position 47 (methionine 47) interacts with substrate. ATP-binding residues include arginine 123 and threonine 169. Glycine 196 contacts substrate.

This sequence belongs to the Thz kinase family. It depends on Mg(2+) as a cofactor.

It carries out the reaction 5-(2-hydroxyethyl)-4-methylthiazole + ATP = 4-methyl-5-(2-phosphooxyethyl)-thiazole + ADP + H(+). It participates in cofactor biosynthesis; thiamine diphosphate biosynthesis; 4-methyl-5-(2-phosphoethyl)-thiazole from 5-(2-hydroxyethyl)-4-methylthiazole: step 1/1. Its function is as follows. Catalyzes the phosphorylation of the hydroxyl group of 4-methyl-5-beta-hydroxyethylthiazole (THZ). The sequence is that of Hydroxyethylthiazole kinase from Roseiflexus sp. (strain RS-1).